Consider the following 150-residue polypeptide: Triosephosphate isomerase (150 aa).

Residues N9 and K11 each coordinate substrate. Catalysis depends on H95, which acts as the Electrophile.

The protein belongs to the triosephosphate isomerase family. As to quaternary structure, homodimer.

It is found in the cytoplasm. It carries out the reaction D-glyceraldehyde 3-phosphate = dihydroxyacetone phosphate. It participates in carbohydrate biosynthesis; gluconeogenesis. It functions in the pathway carbohydrate degradation; glycolysis; D-glyceraldehyde 3-phosphate from glycerone phosphate: step 1/1. The protein is Triosephosphate isomerase (tpiA) of Mycoplasmoides pirum (Mycoplasma pirum).